The following is a 230-amino-acid chain: Broad-specificity phosphatase YOR283W (230 aa).

The active-site Tele-phosphohistidine intermediate is histidine 24. Residues 36 to 37 (QG) and 102 to 105 (ERYM) each bind substrate. Glutamate 102 serves as the catalytic Proton donor/acceptor.

This sequence belongs to the phosphoglycerate mutase family. BPG-dependent PGAM subfamily.

Its subcellular location is the cytoplasm. It is found in the nucleus. In terms of biological role, metal-independent phosphatase active against a broad range of phosphorylated substrates including nucleoside tri- and diphosphates, phosphorylated organic acids, and amino acids. Shows no activity against phytic acid, phosphorylated carbohydrates, and nucleoside monophosphates. This is Broad-specificity phosphatase YOR283W from Saccharomyces cerevisiae (strain ATCC 204508 / S288c) (Baker's yeast).